Consider the following 1274-residue polypeptide: Myosin-binding protein C, cardiac-type (1274 aa).

Residue Met1 is modified to N-acetylmethionine. At Ser47 the chain carries Phosphoserine. Residues 107-141 show a composition bias toward low complexity; that stretch reads APAPAEATGAPGEAPAPAAELGESAPSPKGSSSAA. The interval 107 to 153 is disordered; it reads APAPAEATGAPGEAPAPAAELGESAPSPKGSSSAALNGPTPGAPDDP. Positions 153–256 constitute an Ig-like C2-type 1 domain; that stretch reads PIGLFVMRPQ…FDCSNFNLTV (104 aa). Zn(2+)-binding residues include Gln208, His210, Glu223, and His225. Phosphoserine; by PKA and PKC occurs at positions 275, 284, and 304. 2 positions are modified to phosphoserine: Ser311 and Ser427. 4 Ig-like C2-type domains span residues 362–452, 453–543, 544–633, and 645–771; these read STAF…VKEP, PVLI…VQEK, KLEV…HFME, and PKIH…VIDV. A disulfide bridge connects residues Cys436 and Cys443. Ser550 carries the post-translational modification Phosphoserine. At Thr607 the chain carries Phosphothreonine. Fibronectin type-III domains are found at residues 774 to 870 and 872 to 967; these read APAA…IGPP and EPTH…VQEI. The Ig-like C2-type 6 domain maps to 971–1065; the sequence is PRLQLPRHLR…ATLVLQVVDK (95 aa). Positions 1068 to 1163 constitute a Fibronectin type-III 3 domain; sequence PPQDLRVTDA…TKEPVFIPRP (96 aa). The 94-residue stretch at 1181–1274 folds into the Ig-like C2-type 7 domain; the sequence is PSFTQPLVNR…ECRLEVRVPQ (94 aa). Omega-N-methylarginine is present on Arg1241.

The protein belongs to the immunoglobulin superfamily. MyBP family. In terms of processing, substrate for phosphorylation by PKA and PKC. Reversible phosphorylation appears to modulate contraction. Post-translationally, polyubiquitinated.

Functionally, thick filament-associated protein located in the crossbridge region of vertebrate striated muscle a bands. In vitro it binds MHC, F-actin and native thin filaments, and modifies the activity of actin-activated myosin ATPase. It may modulate muscle contraction or may play a more structural role. The chain is Myosin-binding protein C, cardiac-type (MYBPC3) from Homo sapiens (Human).